The chain runs to 255 residues: Biotin carboxyl carrier protein of acetyl-CoA carboxylase 2, chloroplastic (255 aa).

The N-terminal 87 residues, 1 to 87 (MASLSVPCVK…TNVPEPAELS (87 aa)), are a transit peptide targeting the chloroplast. Positions 148 to 193 (PPAQPVALPPSPTPTSTPATAKPTSAPSSSHPPLKSPMAGTFYRSP) are disordered. Over residues 149 to 162 (PAQPVALPPSPTPT) the composition is skewed to pro residues. Over residues 163-180 (STPATAKPTSAPSSSHPP) the composition is skewed to low complexity. A Biotinyl-binding domain is found at 178 to 254 (HPPLKSPMAG…SVDTPLFVIA (77 aa)). Lysine 220 is modified (N6-biotinyllysine).

In terms of assembly, acetyl-CoA carboxylase is a heterohexamer composed of biotin carboxyl carrier protein, biotin carboxylase and 2 subunits each of ACCase subunit alpha and ACCase plastid-coded subunit beta (accD). As to expression, primarily expressed in 7 to 10 days after flowering seeds at levels approximately 2-fold less abundant than BCCP1.

It is found in the plastid. It localises to the chloroplast. It functions in the pathway lipid metabolism; fatty acid biosynthesis. Its function is as follows. This protein is a component of the acetyl coenzyme A carboxylase complex; first, biotin carboxylase catalyzes the carboxylation of the carrier protein and then the transcarboxylase transfers the carboxyl group to form malonyl-CoA. This is Biotin carboxyl carrier protein of acetyl-CoA carboxylase 2, chloroplastic (BCCP2) from Arabidopsis thaliana (Mouse-ear cress).